A 372-amino-acid polypeptide reads, in one-letter code: Chaperone protein DnaJ (372 aa).

A J domain is found at 5–70 (SYYDILGVSK…KKRQAYDQFG (66 aa)). The CR-type zinc-finger motif lies at 140–218 (GREYKIEIPR…CGGQGLQEKR (79 aa)). Residues cysteine 153, cysteine 156, cysteine 170, cysteine 173, cysteine 192, cysteine 195, cysteine 206, and cysteine 209 each contribute to the Zn(2+) site. CXXCXGXG motif repeat units follow at residues 153–160 (CVDCNGSG), 170–177 (CPDCGGSG), 192–199 (CPTCRGKG), and 206–213 (CRSCGGQG).

It belongs to the DnaJ family. Homodimer. Requires Zn(2+) as cofactor.

It is found in the cytoplasm. In terms of biological role, participates actively in the response to hyperosmotic and heat shock by preventing the aggregation of stress-denatured proteins and by disaggregating proteins, also in an autonomous, DnaK-independent fashion. Unfolded proteins bind initially to DnaJ; upon interaction with the DnaJ-bound protein, DnaK hydrolyzes its bound ATP, resulting in the formation of a stable complex. GrpE releases ADP from DnaK; ATP binding to DnaK triggers the release of the substrate protein, thus completing the reaction cycle. Several rounds of ATP-dependent interactions between DnaJ, DnaK and GrpE are required for fully efficient folding. Also involved, together with DnaK and GrpE, in the DNA replication of plasmids through activation of initiation proteins. The protein is Chaperone protein DnaJ of Leptospira interrogans serogroup Icterohaemorrhagiae serovar copenhageni (strain Fiocruz L1-130).